The chain runs to 902 residues: AP-4 complex accessory subunit RUSC1 (902 aa).

Disordered regions lie at residues glutamate 31–proline 67, leucine 81–cysteine 155, glutamine 189–proline 227, and lysine 247–glycine 450. Positions alanine 94–leucine 112 are enriched in low complexity. The segment covering threonine 249–asparagine 261 has biased composition (low complexity). Residues tryptophan 277 to lysine 289 show a composition bias toward polar residues. The span at aspartate 291–proline 309 shows a compositional bias: basic and acidic residues. Composition is skewed to pro residues over residues proline 381–proline 390 and proline 398–proline 407. Over residues proline 433–glycine 450 the composition is skewed to low complexity. An interaction with TRAF6 region spans residues methionine 470–asparagine 605. Positions aspartate 522 to glutamate 666 constitute an RUN domain. Residues threonine 606–proline 672 are interaction with IKBKG. Disordered regions lie at residues leucine 706–tryptophan 729 and glycine 747–methionine 776. In terms of domain architecture, SH3 spans glutamine 844–leucine 902.

Associated component of the adapter-like complex 4 (AP-4). Interacts with IKBKG and TRAF6. Interacts with F-actin, acetylated actin, TUBB3, STX1A, KIF5B and KLC1. Phosphorylated on serine residues following nuclear translocation. Post-translationally, polyubiquitinated; polyubiquitination involves TRAF6. Predominantly expressed in brain.

The protein localises to the cytoplasm. It localises to the nucleus. Its subcellular location is the cytoskeleton. The protein resides in the cytoplasmic vesicle. It is found in the early endosome. The protein localises to the postsynaptic density. It localises to the golgi apparatus. Functionally, associates with the adapter-like complex 4 (AP-4) and may therefore play a role in vesicular trafficking of proteins at the trans-Golgi network. Signaling adapter which plays a role in neuronal differentiation. Involved in regulation of NGF-dependent neurite outgrowth. May play a role in neuronal vesicular trafficking, specifically involving pre-synaptic membrane proteins. Seems to be involved in signaling pathways that are regulated by the prolonged activation of MAPK. Can regulate the polyubiquitination of IKBKG and thus may be involved in regulation of the NF-kappa-B pathway. In Homo sapiens (Human), this protein is AP-4 complex accessory subunit RUSC1.